A 207-amino-acid polypeptide reads, in one-letter code: LexA repressor (207 aa).

The H-T-H motif DNA-binding region spans 28–48 (VREIGEAVGLASSSTVHGHLS). Residues Ser130 and Lys168 each act as for autocatalytic cleavage activity in the active site.

The protein belongs to the peptidase S24 family. As to quaternary structure, homodimer.

It catalyses the reaction Hydrolysis of Ala-|-Gly bond in repressor LexA.. Functionally, represses a number of genes involved in the response to DNA damage (SOS response), including recA and lexA. In the presence of single-stranded DNA, RecA interacts with LexA causing an autocatalytic cleavage which disrupts the DNA-binding part of LexA, leading to derepression of the SOS regulon and eventually DNA repair. This chain is LexA repressor, found in Staphylococcus carnosus (strain TM300).